The primary structure comprises 115 residues: ComG operon protein 5 (115 aa).

Positions 1–7 (MWRENKG) are cleaved as a propeptide — leader sequence. Phenylalanine 8 carries the post-translational modification N-methylphenylalanine. A helical transmembrane segment spans residues 13 to 31 (TMSALSLWLFVLLTVVPLW).

Post-translationally, processing of ComGE in competent cells requires ComC.

It is found in the cell membrane. The protein localises to the cell surface. Required for transformation and DNA binding. The chain is ComG operon protein 5 (comGE) from Bacillus subtilis (strain 168).